A 581-amino-acid chain; its full sequence is 2-succinyl-5-enolpyruvyl-6-hydroxy-3-cyclohexene-1-carboxylate synthase (581 aa).

It belongs to the TPP enzyme family. MenD subfamily. As to quaternary structure, homodimer. Mg(2+) is required as a cofactor. Mn(2+) serves as cofactor. The cofactor is thiamine diphosphate.

The enzyme catalyses isochorismate + 2-oxoglutarate + H(+) = 5-enolpyruvoyl-6-hydroxy-2-succinyl-cyclohex-3-ene-1-carboxylate + CO2. It participates in quinol/quinone metabolism; 1,4-dihydroxy-2-naphthoate biosynthesis; 1,4-dihydroxy-2-naphthoate from chorismate: step 2/7. The protein operates within quinol/quinone metabolism; menaquinone biosynthesis. In terms of biological role, catalyzes the thiamine diphosphate-dependent decarboxylation of 2-oxoglutarate and the subsequent addition of the resulting succinic semialdehyde-thiamine pyrophosphate anion to isochorismate to yield 2-succinyl-5-enolpyruvyl-6-hydroxy-3-cyclohexene-1-carboxylate (SEPHCHC). The polypeptide is 2-succinyl-5-enolpyruvyl-6-hydroxy-3-cyclohexene-1-carboxylate synthase (Psychromonas ingrahamii (strain DSM 17664 / CCUG 51855 / 37)).